Reading from the N-terminus, the 467-residue chain is Keratin, type 1 cytoskeletal 11 (467 aa).

Residues 1 to 100 (MSYSSFSIAQ…GGTDFLLGTS (100 aa)) are head. A compositionally biased stretch (low complexity) spans 12–30 (SRVPSLSGTRSSSSYSLKS). The segment at 12–32 (SRVPSLSGTRSSSSYSLKSDL) is disordered. The coil 1A stretch occupies residues 101 to 137 (GKEAMQNLNDRLADYLARVRSLEDRNRELEQKIREWY). The 313-residue stretch at 101 to 413 (GKEAMQNLND…TLLEGDAGRS (313 aa)) folds into the IF rod domain. A linker 1 region spans residues 138 to 156 (EKQGAGTKRKDFSHYFKII). The segment at 157-248 (ADLQNQINAG…SHDEDMKALR (92 aa)) is coil 1B. The tract at residues 249 to 268 (SQLGGQVNVEVDAAPAEDLT) is linker 12. Positions 269 to 416 (KKLEIIRQRY…EGDAGRSHSS (148 aa)) are coil 2. The tract at residues 409–430 (DAGRSHSSSHLSSTVSKDKVPV) is disordered. The tract at residues 417 to 463 (SHLSSTVSKDKVPVSSPNVITKVRTIVEEKINGQVISKKEYEGSPDQ) is tail.

Belongs to the intermediate filament family. As to quaternary structure, heterotetramer of two type I and two type II keratins. As to expression, expressed in the outermost cell layers of skin epidermis (at protein level).

In Protopterus aethiopicus (Marbled lungfish), this protein is Keratin, type 1 cytoskeletal 11.